A 358-amino-acid chain; its full sequence is Uroporphyrinogen decarboxylase (358 aa).

Substrate-binding positions include 27–31 (RQAGR), Asp77, Tyr154, Ser209, and His330.

This sequence belongs to the uroporphyrinogen decarboxylase family. Homodimer.

The protein localises to the cytoplasm. It carries out the reaction uroporphyrinogen III + 4 H(+) = coproporphyrinogen III + 4 CO2. It functions in the pathway porphyrin-containing compound metabolism; protoporphyrin-IX biosynthesis; coproporphyrinogen-III from 5-aminolevulinate: step 4/4. Its function is as follows. Catalyzes the decarboxylation of four acetate groups of uroporphyrinogen-III to yield coproporphyrinogen-III. In Acinetobacter baylyi (strain ATCC 33305 / BD413 / ADP1), this protein is Uroporphyrinogen decarboxylase.